The primary structure comprises 560 residues: Probable sulfate transporter MT1781 (560 aa).

The next 11 membrane-spanning stretches (helical) occupy residues Val-29 to Val-49, Gly-51 to Leu-71, Ile-79 to Gly-99, Ala-105 to Ala-125, Val-138 to Ile-158, Trp-184 to Ala-204, Ala-207 to Asp-227, Ala-256 to Ala-276, Leu-333 to Phe-353, Ile-355 to Phe-375, and Ala-394 to Leu-414. Residues Asp-442–Phe-557 form the STAS domain.

This sequence belongs to the SLC26A/SulP transporter (TC 2.A.53) family.

It is found in the cell membrane. The polypeptide is Probable sulfate transporter MT1781 (Mycobacterium tuberculosis (strain CDC 1551 / Oshkosh)).